The chain runs to 230 residues: Bidirectional sugar transporter SWEET16 (230 aa).

Over 1–3 (MAD) the chain is Extracellular. Residues 4 to 24 (LSFYVGVIGNVISVLVFLSPV) traverse the membrane as a helical segment. A MtN3/slv 1 domain is found at 6 to 92 (FYVGVIGNVI…LIFLFFVPKS (87 aa)). The Cytoplasmic portion of the chain corresponds to 25–40 (ETFWRIVQRRSTEEYE). A helical membrane pass occupies residues 41–61 (CFPYICTLMSSSLWTYYGIVT). At 62–69 (PGEYLVST) the chain is on the extracellular side. A helical transmembrane segment spans residues 70 to 90 (VNGFGALAESIYVLIFLFFVP). Residues 91-93 (KSR) are Cytoplasmic-facing. A helical membrane pass occupies residues 94-114 (FLKTVVVVLALNVCFPVIAIA). The Extracellular segment spans residues 115-128 (GTRTLFGDANSRSS). A helical membrane pass occupies residues 129 to 149 (SMGFICATLNIIMYGSPLSAI). Residues 129-212 (SMGFICATLN…LLIYAYYRNA (84 aa)) enclose the MtN3/slv 2 domain. The Cytoplasmic portion of the chain corresponds to 150–162 (KTVVTTRSVQFMP). Residues 163–183 (FWLSFFLFLNGAIWGVYALLL) traverse the membrane as a helical segment. Residues 184–185 (HD) lie on the Extracellular side of the membrane. A helical membrane pass occupies residues 186–206 (MFLLVPNGMGFFLGIMQLLIY). At 207–230 (AYYRNAEPIVEDEEGLIPNQPLLA) the chain is on the cytoplasmic side.

It belongs to the SWEET sugar transporter family. In terms of assembly, forms homooligomers and heterooligomers with SWEET1, SWEET7, SWEET8, SWEET9 and SWEET17. As to expression, mostly expressed in the cortex of mature roots, and, to a lower extent, in aerial organs such as leaves, stems, and flowers. Mainly present in vascular parenchyma cells, especially in the petiole vasculature, flower stalks and at the base of individual, not fully developed flowers.

It is found in the vacuole membrane. Mediates both low-affinity uptake and efflux of sugar across the vacuolar membrane. Regulates sugars homeostasis in leaves and roots by exporting/importing them through the tonoplast regarding metabolic demand. Acts as a vacuolar hexose transporter, such as glucose (Glc), fructose (Fru), and sucrose (Suc). In Arabidopsis thaliana (Mouse-ear cress), this protein is Bidirectional sugar transporter SWEET16.